The sequence spans 576 residues: Proline--tRNA ligase (576 aa).

This sequence belongs to the class-II aminoacyl-tRNA synthetase family. ProS type 1 subfamily. Homodimer.

It is found in the cytoplasm. It catalyses the reaction tRNA(Pro) + L-proline + ATP = L-prolyl-tRNA(Pro) + AMP + diphosphate. Functionally, catalyzes the attachment of proline to tRNA(Pro) in a two-step reaction: proline is first activated by ATP to form Pro-AMP and then transferred to the acceptor end of tRNA(Pro). As ProRS can inadvertently accommodate and process non-cognate amino acids such as alanine and cysteine, to avoid such errors it has two additional distinct editing activities against alanine. One activity is designated as 'pretransfer' editing and involves the tRNA(Pro)-independent hydrolysis of activated Ala-AMP. The other activity is designated 'posttransfer' editing and involves deacylation of mischarged Ala-tRNA(Pro). The misacylated Cys-tRNA(Pro) is not edited by ProRS. This chain is Proline--tRNA ligase, found in Finegoldia magna (strain ATCC 29328 / DSM 20472 / WAL 2508) (Peptostreptococcus magnus).